Reading from the N-terminus, the 323-residue chain is Large ribosomal subunit protein uL10 (323 aa).

The segment at 296-323 (AAPAAPSAAAKEEPEESDEDDFGMGGLF) is disordered. A compositionally biased stretch (acidic residues) spans 308–317 (EPEESDEDDF).

The protein belongs to the universal ribosomal protein uL10 family. As to quaternary structure, P0 forms a pentameric complex by interaction with dimers of P1 and P2. Post-translationally, phosphorylated.

Functionally, ribosomal protein P0 is the functional equivalent of E.coli protein L10. This is Large ribosomal subunit protein uL10 (LIPO-A) from Leishmania infantum.